Here is an 858-residue protein sequence, read N- to C-terminus: Elongation factor 2 (858 aa).

A tr-type G domain is found at 17–362 (ANIRNMSVIA…MITIHLPSPV (346 aa)). 26-33 (AHVDHGKS) is a binding site for GTP. Phosphothreonine is present on T54. Residue T57 is modified to Phosphothreonine; by EEF2K. The residue at position 59 (T59) is a Phosphothreonine. K152 bears the N6-succinyllysine mark. GTP-binding positions include 158–161 (NKMD) and 216–218 (SGL). K235 bears the N6-acetyllysine mark. K239 is modified (N6-acetyllysine; alternate). K239 participates in a covalent cross-link: Glycyl lysine isopeptide (Lys-Gly) (interchain with G-Cter in SUMO1); alternate. At Y265 the chain carries Phosphotyrosine; by CSK. N6-acetyllysine; alternate is present on K272. K272 carries the N6-succinyllysine; alternate modification. Position 275 is an N6-acetyllysine (K275). Residue K322 forms a Glycyl lysine isopeptide (Lys-Gly) (interchain with G-Cter in SUMO) linkage. S325 is subject to Phosphoserine. At Y373 the chain carries Phosphotyrosine; by CSK. Residue T435 is modified to Phosphothreonine. K439 and K445 each carry N6-acetyllysine. Phosphoserine is present on S502. K525 is subject to N6,N6,N6-trimethyllysine; by EEF2KMT. K529 participates in a covalent cross-link: Glycyl lysine isopeptide (Lys-Gly) (interchain with G-Cter in SUMO). An N6-succinyllysine modification is found at K572. The residue at position 595 (S595) is a Phosphoserine; by CDK2. Residue K619 is modified to N6-acetyllysine. A Diphthamide modification is found at H715.

It belongs to the TRAFAC class translation factor GTPase superfamily. Classic translation factor GTPase family. EF-G/EF-2 subfamily. In terms of assembly, binds to 80S ribosomes. Actively translating ribosomes show mutually exclusive binding of eIF5a (EIF5A or EIF5A2) and EEF2/eEF2. Interacts with SERBP1; interaction sequesters EEF2/eEF2 at the A-site of the ribosome, thereby blocking the interaction sites of the mRNA-tRNA complex, promoting ribosome stabilization and hibernation. Interacts with HABP4; interaction takes place at the A-site of hibernating ribosomes and promotes ribosome stabilization. Component of the mRNA surveillance SURF complex, at least composed of ERF1, ERF3 (ERF3A or ERF3B), EEF2, UPF1/RENT1, SMG1, SMG8 and SMG9. Interacts with RBPMS2. Phosphorylation by EF-2 kinase completely inactivates EF-2; it requires prior phosphorylation by CDK2 at Ser-595 during mitotic prometaphase. Phosphorylation by CSK promotes SUMOylation, proteolytic cleavage, and nuclear translocation if the C-terminal fragment. In terms of processing, diphthamide is 2-[3-carboxyamido-3-(trimethyl-ammonio)propyl]histidine. Post-translationally, ISGylated. Proteolytically processed at two sites following phosphorylation by CSK. In terms of processing, SUMOylated following phosphorylation by CSK, promotes proteolytic cleavage.

Its subcellular location is the cytoplasm. The protein resides in the nucleus. It carries out the reaction GTP + H2O = GDP + phosphate + H(+). Functionally, catalyzes the GTP-dependent ribosomal translocation step during translation elongation. During this step, the ribosome changes from the pre-translocational (PRE) to the post-translocational (POST) state as the newly formed A-site-bound peptidyl-tRNA and P-site-bound deacylated tRNA move to the P and E sites, respectively. Catalyzes the coordinated movement of the two tRNA molecules, the mRNA and conformational changes in the ribosome. In Mus musculus (Mouse), this protein is Elongation factor 2 (Eef2).